We begin with the raw amino-acid sequence, 635 residues long: Probable extracellular metalloproteinase 1 (635 aa).

A signal peptide spans 1-19; the sequence is MHGLLLAAGLLSLPLHVLA. A propeptide spanning residues 20–246 is cleaved from the precursor; that stretch reads HPQPSTSTSL…VHNVVDYVAH (227 aa). An N-linked (GlcNAc...) asparagine glycan is attached at Asn-287. A Zn(2+)-binding site is contributed by His-430. Glu-431 is a catalytic residue. Zn(2+) is bound at residue His-434. 3 N-linked (GlcNAc...) asparagine glycosylation sites follow: Asn-475, Asn-594, and Asn-623.

Belongs to the peptidase M36 family. Zn(2+) serves as cofactor.

Its subcellular location is the secreted. Functionally, secreted metalloproteinase probably acting as a virulence factor. The polypeptide is Probable extracellular metalloproteinase 1 (MEP1) (Arthroderma benhamiae (strain ATCC MYA-4681 / CBS 112371) (Trichophyton mentagrophytes)).